The primary structure comprises 290 residues: Acetylglutamate kinase (290 aa).

Substrate contacts are provided by residues 65–66 (GG), arginine 87, and asparagine 186.

The protein belongs to the acetylglutamate kinase family. ArgB subfamily.

It localises to the cytoplasm. It catalyses the reaction N-acetyl-L-glutamate + ATP = N-acetyl-L-glutamyl 5-phosphate + ADP. The protein operates within amino-acid biosynthesis; L-arginine biosynthesis; N(2)-acetyl-L-ornithine from L-glutamate: step 2/4. In terms of biological role, catalyzes the ATP-dependent phosphorylation of N-acetyl-L-glutamate. This is Acetylglutamate kinase from Mycobacterium sp. (strain KMS).